The primary structure comprises 82 residues: Cytotoxin 6 (82 aa).

An N-terminal signal peptide occupies residues 1-21; it reads MKTLLLTLVVVTIVCLDLGYT. Cystine bridges form between Cys24–Cys42, Cys35–Cys59, Cys63–Cys74, and Cys75–Cys80.

It belongs to the three-finger toxin family. Short-chain subfamily. Type IA cytotoxin sub-subfamily. In terms of assembly, monomer in solution; Homodimer and oligomer in the presence of negatively charged lipids forming a pore with a size ranging between 20 and 30 Angstroms. As to expression, expressed by the venom gland.

It localises to the secreted. Its subcellular location is the target cell membrane. Shows cytolytic activity on many different cells by forming pore in lipid membranes. In vivo, increases heart rate or kills the animal by cardiac arrest. In addition, it binds to heparin with high affinity, interacts with Kv channel-interacting protein 1 (KCNIP1) in a calcium-independent manner, and binds to integrin alpha-V/beta-3 (ITGAV/ITGB3) with moderate affinity. In Naja atra (Chinese cobra), this protein is Cytotoxin 6.